The chain runs to 268 residues: tRNA pseudouridine synthase A (268 aa).

Residue Asp-52 is the Nucleophile of the active site. Substrate is bound at residue Tyr-110.

This sequence belongs to the tRNA pseudouridine synthase TruA family. Homodimer.

It carries out the reaction uridine(38/39/40) in tRNA = pseudouridine(38/39/40) in tRNA. Formation of pseudouridine at positions 38, 39 and 40 in the anticodon stem and loop of transfer RNAs. In Prochlorococcus marinus subsp. pastoris (strain CCMP1986 / NIES-2087 / MED4), this protein is tRNA pseudouridine synthase A.